A 124-amino-acid chain; its full sequence is Large ribosomal subunit protein bL12 (124 aa).

It belongs to the bacterial ribosomal protein bL12 family. As to quaternary structure, homodimer. Part of the ribosomal stalk of the 50S ribosomal subunit. Forms a multimeric L10(L12)X complex, where L10 forms an elongated spine to which 2 to 4 L12 dimers bind in a sequential fashion. Binds GTP-bound translation factors.

Forms part of the ribosomal stalk which helps the ribosome interact with GTP-bound translation factors. Is thus essential for accurate translation. The sequence is that of Large ribosomal subunit protein bL12 from Cupriavidus taiwanensis (strain DSM 17343 / BCRC 17206 / CCUG 44338 / CIP 107171 / LMG 19424 / R1) (Ralstonia taiwanensis (strain LMG 19424)).